A 243-amino-acid polypeptide reads, in one-letter code: UPF0246 protein M28_Spy1772 (243 aa).

The protein belongs to the UPF0246 family.

The chain is UPF0246 protein M28_Spy1772 from Streptococcus pyogenes serotype M28 (strain MGAS6180).